The following is a 399-amino-acid chain: Nicotinate phosphoribosyltransferase (399 aa).

His-221 carries the phosphohistidine; by autocatalysis modification.

This sequence belongs to the NAPRTase family. Transiently phosphorylated on a His residue during the reaction cycle. Phosphorylation strongly increases the affinity for substrates and increases the rate of nicotinate D-ribonucleotide production. Dephosphorylation regenerates the low-affinity form of the enzyme, leading to product release.

It carries out the reaction nicotinate + 5-phospho-alpha-D-ribose 1-diphosphate + ATP + H2O = nicotinate beta-D-ribonucleotide + ADP + phosphate + diphosphate. Its pathway is cofactor biosynthesis; NAD(+) biosynthesis; nicotinate D-ribonucleotide from nicotinate: step 1/1. Its function is as follows. Catalyzes the synthesis of beta-nicotinate D-ribonucleotide from nicotinate and 5-phospho-D-ribose 1-phosphate at the expense of ATP. This is Nicotinate phosphoribosyltransferase from Buchnera aphidicola subsp. Acyrthosiphon pisum (strain 5A).